The sequence spans 347 residues: Protein pelota homolog (347 aa).

Belongs to the eukaryotic release factor 1 family. Pelota subfamily. In terms of assembly, monomer. A divalent metal cation is required as a cofactor.

Its subcellular location is the cytoplasm. May function in recognizing stalled ribosomes, interact with stem-loop structures in stalled mRNA molecules, and effect endonucleolytic cleavage of the mRNA. May play a role in the release non-functional ribosomes and degradation of damaged mRNAs. Has endoribonuclease activity. The polypeptide is Protein pelota homolog (Methanocaldococcus jannaschii (strain ATCC 43067 / DSM 2661 / JAL-1 / JCM 10045 / NBRC 100440) (Methanococcus jannaschii)).